The following is a 384-amino-acid chain: MSSVPAPREYFLDSIRAWLMLLGIPFHISLIYSTHSWHVNSAAPSWWLTLFNDFIHAFRMQVFFVISGYFSYMLFLRYPLKHWWKVRVERVGIPMLTAIPLLTLPQFILLQYVKEKTENWPTLSAYEKYNTLAWELISHLWFLLVLVILTTVSIGIFTWFQKRQETSKPRPAAISLAKLSLIFFLLGVAYAAIRRIIFIVYPAILSDGMFNFIVMQTLFYVPFFILGALAFIHPDLKARFTTPSRGCTLGAAVAFIAYLLNQRYGSGDAWMYETESVITMVMGLWMVNVVFSLGHRLLNFQSARVTYFVNASLFIYLVHHPLTLFFGAYITPHISSNLIGFLCGLIFVMGIALILYEIHLRIPLLKFLFSGKPPVKRESRATIG.

The next 10 membrane-spanning stretches (helical) occupy residues 17–37 (AWLM…THSW), 54–74 (FIHA…SYML), 91–111 (VGIP…ILLQ), 140–160 (LWFL…FTWF), 173–193 (AISL…YAAI), 212–232 (FIVM…LAFI), 240–260 (FTTP…AYLL), 274–294 (TESV…FSLG), 311–331 (ASLF…AYIT), and 338–358 (LIGF…LYEI).

The protein belongs to the acyltransferase 3 family. OpgC subfamily.

The protein resides in the cell membrane. Its pathway is glycan metabolism; osmoregulated periplasmic glucan (OPG) biosynthesis. Necessary for the succinyl substitution of periplasmic glucans. Could catalyze the transfer of succinyl residues from the cytoplasmic side of the membrane to the nascent glucan backbones on the periplasmic side of the membrane. This chain is Glucans biosynthesis protein C, found in Salmonella typhimurium (strain LT2 / SGSC1412 / ATCC 700720).